Consider the following 472-residue polypeptide: 3-isopropylmalate dehydratase large subunit (472 aa).

Residues Cys352, Cys413, and Cys416 each coordinate [4Fe-4S] cluster.

The protein belongs to the aconitase/IPM isomerase family. LeuC type 1 subfamily. In terms of assembly, heterodimer of LeuC and LeuD. It depends on [4Fe-4S] cluster as a cofactor.

The catalysed reaction is (2R,3S)-3-isopropylmalate = (2S)-2-isopropylmalate. It functions in the pathway amino-acid biosynthesis; L-leucine biosynthesis; L-leucine from 3-methyl-2-oxobutanoate: step 2/4. Catalyzes the isomerization between 2-isopropylmalate and 3-isopropylmalate, via the formation of 2-isopropylmaleate. This Laribacter hongkongensis (strain HLHK9) protein is 3-isopropylmalate dehydratase large subunit.